A 321-amino-acid chain; its full sequence is Transcription factor ATOH8 (321 aa).

Disordered stretches follow at residues 59 to 193 (GLRD…SSYS) and 203 to 222 (HQDS…AASS). A compositionally biased stretch (pro residues) spans 70–85 (VPVPVPVPVPVAPAVP). A compositionally biased stretch (basic and acidic residues) spans 93–109 (AGERGGSRAPEVSDARK). Positions 121 to 132 (LPTPPPPPPPAP) are enriched in pro residues. Over residues 133 to 143 (QSQAPGGPEAQ) the composition is skewed to low complexity. Over residues 160-186 (PARPAPSAPPAPPAPPESTVRPAPPTR) the composition is skewed to pro residues. The segment at 230 to 243 (TRRLLANARERTRV) is basic motif; degenerate. The bHLH domain occupies 230-282 (TRRLLANARERTRVHTISAAFEALRKQVPCYSYGQKLSKLAILRIACNYILSL). The segment at 244-282 (HTISAAFEALRKQVPCYSYGQKLSKLAILRIACNYILSL) is helix-loop-helix motif.

As to quaternary structure, efficient DNA binding requires dimerization with another bHLH protein. Interacts with NEUROG3 and NEUROD1. Interacts with ZFPM2; mediates indirect interaction with GATA4. Forms a heterodimer with TCF3; repress transcription of TCF3 and TCF3/NEUROG3 dimer-induced transactivation of E box-dependent promoters. In terms of tissue distribution, expressed in lung, liver, kidney, heart and pancreas. Expressed in endothel of umbilical vessels.

The protein localises to the nucleus. The protein resides in the nucleus speckle. It localises to the cytoplasm. Its function is as follows. Transcription factor that binds a palindromic (canonical) core consensus DNA sequence 5'-CANNTG- 3' known as an E-box element, possibly as a heterodimer with other bHLH proteins. Regulates endothelial cell proliferation, migration and tube-like structures formation. Modulates endothelial cell differentiation through NOS3. May be implicated in specification and differentiation of neuronal cell lineages in the brain. May participate in kidney development and may be involved in podocyte differentiation. During early embryonic development is involved in tissue-specific differentiation processes that are dependent on class II bHLH factors and namely modulates the differentiation program initiated by the pro-endocrine factor NEUROG3. During myogenesis, may play a role during the transition of myoblasts from the proliferative phase to the differentiation phase. Positively regulates HAMP transcription in two ways, firstly by acting directly on the HAMP promoter via E-boxes binding and indirectly through increased phosphorylation of SMAD protein complex. Repress NEUROG3-dependent gene activation in a gene-specific manner through at least two mechanisms; requires only either the sequestering of a general partner such as TCF3 through heterodimerization, either also requires binding of the bHLH domain to DNA via a basic motif. This Homo sapiens (Human) protein is Transcription factor ATOH8.